The chain runs to 603 residues: NADH-ubiquinone oxidoreductase chain 5 (603 aa).

The next 15 helical transmembrane spans lie at isoleucine 4–leucine 24, isoleucine 35–valine 55, phenylalanine 84–serine 104, leucine 121–phenylalanine 141, isoleucine 177–glutamate 197, leucine 213–leucine 233, threonine 241–isoleucine 261, valine 273–leucine 293, isoleucine 301–asparagine 320, alanine 325–isoleucine 347, methionine 366–leucine 386, leucine 413–glycine 433, leucine 457–threonine 477, methionine 480–valine 500, and leucine 583–leucine 603.

It belongs to the complex I subunit 5 family. Core subunit of respiratory chain NADH dehydrogenase (Complex I) which is composed of 45 different subunits.

The protein resides in the mitochondrion inner membrane. It catalyses the reaction a ubiquinone + NADH + 5 H(+)(in) = a ubiquinol + NAD(+) + 4 H(+)(out). Its function is as follows. Core subunit of the mitochondrial membrane respiratory chain NADH dehydrogenase (Complex I) which catalyzes electron transfer from NADH through the respiratory chain, using ubiquinone as an electron acceptor. Essential for the catalytic activity and assembly of complex I. The polypeptide is NADH-ubiquinone oxidoreductase chain 5 (MT-ND5) (Mammuthus primigenius (Siberian woolly mammoth)).